The primary structure comprises 1595 residues: Collagen-like protein 2 (1595 aa).

N-linked (GlcNAc...) asparagine; by host glycans are attached at residues N87 and N134. 4 consecutive Collagen-like domains span residues 97-155 (LRGE…NGDV), 175-233 (QVGL…KGEG), 236-295 (GSKG…KGDI), and 299-358 (GIKG…KGMK). Low complexity predominate over residues 181–190 (SQGDQGYKGD). Disordered regions lie at residues 181 to 577 (SQGD…SPDL) and 604 to 1326 (TDIK…GIKG). 14 stretches are compositionally biased toward basic and acidic residues: residues 191 to 200 (QGSKGDKGQK), 209 to 448 (KGDK…KGTK), 456 to 466 (YKGDIGDKGIK), 474 to 501 (DKGDKGIKGDKGDKGIKGDDGSKGDKGY), 510 to 561 (DNGE…DKGE), 606 to 615 (IKGEKGDKGE), 622 to 702 (KGDK…DKGD), 718 to 825 (KGDK…DKGI), 832 to 883 (KGDK…KGFK), 895 to 1041 (KGDK…DKGI), 1048 to 1098 (KGNK…DQGT), 1107 to 1151 (KGDK…KGIK), 1159 to 1250 (NKGD…KGDQ), and 1265 to 1300 (KGDKGDKGDKGDKGDKGDKGAKGDKGDKGDKGDQGI). N274, N280, and N286 each carry an N-linked (GlcNAc...) asparagine; by host glycan. N-linked (GlcNAc...) asparagine; by host glycosylation is found at N373, N382, N400, and N409. Collagen-like domains are found at residues 380 to 559 (GDNG…KGDK), 608 to 907 (GEKG…KGEN), 920 to 1039 (GDKG…KGDK), 1043 to 1102 (GTNG…KGET), and 1128 to 1307 (GDQG…SGAS). 3 N-linked (GlcNAc...) asparagine; by host glycosylation sites follow: N1345, N1420, and N1545. The disordered stretch occupies residues 1538–1585 (SAFDKGGNGSIRFNPPSSGTKGSGGGGSVQGGGGTIPNDGYPGGNGGP). The segment covering 1558–1585 (KGSGGGGSVQGGGGTIPNDGYPGGNGGP) has biased composition (gly residues).

Post-translationally, may be hydroxylated on lysine by the viral-encoded procollagen-lysine,2-oxoglutarate 5-dioxygenase.

It is found in the virion. Its function is as follows. May participate in the formation of a layer of cross-linked glycosylated fibrils at the viral surface thus giving it a hairy-like appearance. This Acanthamoeba polyphaga (Amoeba) protein is Collagen-like protein 2.